Consider the following 373-residue polypeptide: Velvet complex subunit RYP3 (373 aa).

A compositionally biased stretch (basic and acidic residues) spans 1–10; sequence MYTLKQDRPH. Disordered stretches follow at residues 1-26 and 344-373; these read MYTLKQDRPHPVPPPPPLTMDHLQHG and RKDGVKGPRGGQSHGSKGQDGEGEDWENEG. The Velvet domain maps to 48 to 344; that stretch reads VYEGRIYSLD…AFQGIKIPIR (297 aa). Over residues 364–373 the composition is skewed to acidic residues; sequence GEGEDWENEG.

This sequence belongs to the velvet family. VelB subfamily. As to quaternary structure, component of the heterotrimeric velvet complex composed of LAE1, VEL1 and VEL2; VEL1A acting as a bridging protein between LAE1 and VEL2. Forms a heterodimeric complex with VOS1; the formation of the VEL2-VOS1 complex is light-dependent.

The protein resides in the nucleus. Its subcellular location is the cytoplasm. Component of the velvet transcription factor complex that controls sexual/asexual developmental ratio in response to light, promoting sexual development in the darkness while stimulating asexual sporulation under illumination. The velvet complex acts as a global regulator for secondary metabolite gene expression. Component of the RYP2-RYP3 heterodimeric complex that plays a dual role in activating genes associated with spore maturation and repressing certain development-associated genes. The complex binds DNA through the DNA-binding domain of RYP2 that recognizes an 11-nucleotide consensus sequence 5'-CTGGCCGCGGC-3' consisting of two motifs in the promoters of key developmental regulatory genes. Required for viable spore production and regulation of sporulation in response to temperature, as well as for the switch to yeast-form in the presence of host cells. This is Velvet complex subunit RYP3 (RYP3) from Ajellomyces capsulatus (Darling's disease fungus).